Consider the following 194-residue polypeptide: FAD-linked sulfhydryl oxidase ERV1 (194 aa).

The disordered stretch occupies residues 44–72 (LSLSLSPPPTPPSPPPPPPEVLKKDSKAA). Over residues 49–63 (SPPPTPPSPPPPPPE) the composition is skewed to pro residues. One can recognise an ERV/ALR sulfhydryl oxidase domain in the interval 72 to 172 (APLTKEEVGR…FPCQRVNARW (101 aa)). Residues lysine 76, arginine 81, tryptophan 84, glutamate 121, histidine 125, cysteine 148, histidine 151, asparagine 152, asparagine 155, lysine 160, and arginine 171 each contribute to the FAD site. Cysteines 119 and 122 form a disulfide. A disulfide bridge links cysteine 148 with cysteine 165. Cysteine 177 and cysteine 182 are oxidised to a cystine. The Required for dimerization and substrate specificity signature appears at 177–182 (CPERSC).

In terms of assembly, homodimer. FAD is required as a cofactor. Contains three disulfide bonds; one catalytic disulfide (Cys-119 to Cys-122), one structural disulfide (Cys-148 to Cys-165), and one shuttle disulfide (Cys-177 to Cys-182).

The protein localises to the mitochondrion. The enzyme catalyses 2 R'C(R)SH + O2 = R'C(R)S-S(R)CR' + H2O2. Its function is as follows. FAD-dependent sulfhydryl oxidase that catalyzes disulfide bond formation. Oxidizes thioredoxin in vitro. Required for the import and folding of small cysteine-containing proteins in the mitochondrial intermembrane space, and can act independently of the oxidoreductase MIA40. Can oxidize the cytochrome c oxidase assembly protein COX19, a typical substrate of MIA40. This Oryza sativa subsp. japonica (Rice) protein is FAD-linked sulfhydryl oxidase ERV1.